Consider the following 173-residue polypeptide: Mediator of RNA polymerase II transcription subunit 10 (173 aa).

Polar residues predominate over residues 1-20 (MDPNSPMFQNTPQQPMSLQR). The segment at 1–45 (MDPNSPMFQNTPQQPMSLQRSVDDRIDRERTAKKEKDDEKKKQED) is disordered. Over residues 21–45 (SVDDRIDRERTAKKEKDDEKKKQED) the composition is skewed to basic and acidic residues.

This sequence belongs to the Mediator complex subunit 10 family. As to quaternary structure, component of the Mediator complex.

It localises to the nucleus. In terms of biological role, component of the Mediator complex, a coactivator involved in the regulated transcription of nearly all RNA polymerase II-dependent genes. Mediator functions as a bridge to convey information from gene-specific regulatory proteins to the basal RNA polymerase II transcription machinery. Mediator is recruited to promoters by direct interactions with regulatory proteins and serves as a scaffold for the assembly of a functional preinitiation complex with RNA polymerase II and the general transcription factors. The polypeptide is Mediator of RNA polymerase II transcription subunit 10 (mdt-10) (Caenorhabditis briggsae).